The sequence spans 89 residues: Acylphosphatase (89 aa).

The region spanning 3-89 (RFTARVAGLV…QSDLTDFRRK (87 aa)) is the Acylphosphatase-like domain. Residues arginine 18 and asparagine 36 contribute to the active site.

It belongs to the acylphosphatase family.

It catalyses the reaction an acyl phosphate + H2O = a carboxylate + phosphate + H(+). The polypeptide is Acylphosphatase (acyP) (Frankia casuarinae (strain DSM 45818 / CECT 9043 / HFP020203 / CcI3)).